We begin with the raw amino-acid sequence, 336 residues long: ATP-dependent 6-phosphofructokinase 3 (336 aa).

Residues Gly-10, 72-73, and 108-111 each bind ATP; these read RE and GNGT. Mg(2+) is bound at residue Asn-109. Substrate contacts are provided by residues 131-133, Arg-168, 175-177, Glu-228, Arg-255, and 261-264; these read TID, MGH, and YIQR. Asp-133 (proton acceptor) is an active-site residue.

It belongs to the phosphofructokinase type A (PFKA) family. Mixed-substrate PFK group III subfamily. As to quaternary structure, homodimer or homotetramer. It depends on Mg(2+) as a cofactor.

The protein resides in the cytoplasm. The enzyme catalyses beta-D-fructose 6-phosphate + ATP = beta-D-fructose 1,6-bisphosphate + ADP + H(+). It participates in carbohydrate degradation; glycolysis; D-glyceraldehyde 3-phosphate and glycerone phosphate from D-glucose: step 3/4. Functionally, catalyzes the phosphorylation of D-fructose 6-phosphate to fructose 1,6-bisphosphate by ATP, the first committing step of glycolysis. The chain is ATP-dependent 6-phosphofructokinase 3 from Bacteroides thetaiotaomicron (strain ATCC 29148 / DSM 2079 / JCM 5827 / CCUG 10774 / NCTC 10582 / VPI-5482 / E50).